A 387-amino-acid chain; its full sequence is Methionine aminopeptidase 1 (387 aa).

Position 2 is an N-acetylserine (Ser-2). Residues 2-10 (STATTTVTT) constitute a propeptide that is removed on maturation. The C6H2-type zinc finger occupies 19 to 73 (KIYCSGLQCGRETSSQMKCPVCLKQGIVSIFCDTSCYENNYKAHKALHNAKDGLE). Zn(2+)-binding residues include Cys-22, Cys-27, Cys-37, Cys-40, Cys-50, Cys-54, His-62, and His-66. His-202 contributes to the a protein binding site. Zn(2+) is bound by residues Asp-219, Asp-230, and His-294. His-301 contributes to the a protein binding site. Residues Glu-327 and Glu-358 each coordinate Zn(2+).

It belongs to the peptidase M24A family. Methionine aminopeptidase type 1 subfamily. Associates with the 60S ribosomal subunit of the 80S translational complex. Zn(2+) serves as cofactor. Requires Co(2+) as cofactor. It depends on Mn(2+) as a cofactor. The cofactor is Fe(2+).

The protein resides in the cytoplasm. It carries out the reaction Release of N-terminal amino acids, preferentially methionine, from peptides and arylamides.. In contract to the MetAP 2 isoform, is not inhibited by the fungal metabolite fumagillin, an antiangiogenic drug. Its function is as follows. Cotranslationally removes the N-terminal methionine from nascent proteins. The N-terminal methionine is often cleaved when the second residue in the primary sequence is small and uncharged (Met-Ala-, Cys, Gly, Pro, Ser, Thr, or Val). Plays the major role in N-terminal methionine removal. Less efficient when the second residue is Val. The chain is Methionine aminopeptidase 1 (MAP1) from Saccharomyces cerevisiae (strain ATCC 204508 / S288c) (Baker's yeast).